We begin with the raw amino-acid sequence, 524 residues long: M-phase inducer phosphatase 1 (524 aa).

The short motif at 74-84 (MGSSESTDSGF) is the Phosphodegron element. Serine 76 carries the post-translational modification Phosphoserine; by CHEK1. Phosphoserine; by NEK11 is present on residues serine 79, serine 82, and serine 88. The residue at position 107 (serine 107) is a Phosphoserine. Residue serine 124 is modified to Phosphoserine; by CHEK1 and CHEK2. Residues 141-143 (KEN) carry the KEN box motif. Serine 178 carries the phosphoserine; by CHEK1 modification. The interval 264-317 (LCSSSTRSVLKRPERSQEESPPGSTKRRKSMSGASPKESTNPEKAHETLHQSLS) is disordered. A phosphoserine; by CHEK1 and CHEK2 mark is found at serine 279 and serine 293. Basic and acidic residues predominate over residues 303-312 (TNPEKAHETL). Residue serine 321 is modified to Phosphoserine. The Rhodanese domain occupies 376–482 (LIKEFVIIDC…FFMKCQSYCE (107 aa)). Residue cysteine 431 is part of the active site. The residue at position 507 (threonine 507) is a Phosphothreonine; by CHEK1. Phosphoserine; by PLK3 is present on residues serine 513 and serine 519.

Belongs to the MPI phosphatase family. As to quaternary structure, interacts with CCNB1/cyclin B1. Interacts with YWHAE/14-3-3 epsilon when phosphorylated. Interacts with CUL1 specifically when CUL1 is neddylated and active. Interacts with BTRC/BTRCP1 and FBXW11/BTRCP2. Interactions with CUL1, BTRC and FBXW11 are enhanced upon DNA damage. Interacts with CHEK2; mediates CDC25A phosphorylation and degradation in response to infrared-induced DNA damages. Interacts with HSP90AB1; prevents heat shock-mediated CDC25A degradation and contributes to cell cycle progression. In terms of processing, phosphorylated by CHEK1 on Ser-76, Ser-124, Ser-178, Ser-279, Ser-293 and Thr-507 during checkpoint mediated cell cycle arrest. Also phosphorylated by CHEK2 on Ser-124, Ser-279, and Ser-293 during checkpoint mediated cell cycle arrest. Phosphorylation on Ser-178 and Thr-507 creates binding sites for YWHAE/14-3-3 epsilon which inhibits CDC25A. Phosphorylation on Ser-76, Ser-124, Ser-178, Ser-279 and Ser-293 may also promote ubiquitin-dependent proteolysis of CDC25A by the SCF complex. Phosphorylation of CDC25A at Ser-76 by CHEK1 primes it for subsequent phosphorylation at Ser-79, Ser-82 and Ser-88 by NEK11. Phosphorylation by NEK11 is required for BTRC-mediated polyubiquitination and degradation. Phosphorylation by PIM1 leads to an increase in phosphatase activity. Phosphorylated by PLK3 following DNA damage, leading to promote its ubiquitination and degradation. Post-translationally, ubiquitinated by the anaphase promoting complex/cyclosome (APC/C) ubiquitin ligase complex that contains FZR1/CDH1 during G1 phase leading to its degradation by the proteasome. Ubiquitinated by a SCF complex containing BTRC and FBXW11 during S phase leading to its degradation by the proteasome. Deubiquitination by USP17L2/DUB3 leads to its stabilization.

The enzyme catalyses O-phospho-L-tyrosyl-[protein] + H2O = L-tyrosyl-[protein] + phosphate. Its activity is regulated as follows. Stimulated by B-type cyclins. Stimulated by PIM1-mediated phosphorylation. Its function is as follows. Tyrosine protein phosphatase which functions as a dosage-dependent inducer of mitotic progression. Directly dephosphorylates CDK1 and stimulates its kinase activity. Also dephosphorylates CDK2 in complex with cyclin-E, in vitro. The sequence is that of M-phase inducer phosphatase 1 (CDC25A) from Homo sapiens (Human).